Consider the following 87-residue polypeptide: Small ribosomal subunit protein bS20 (87 aa).

Positions 1–25 (MANSAQARKRARQNISHRNRNMSLR) are disordered. Residues 7 to 20 (ARKRARQNISHRNR) are compositionally biased toward basic residues.

Belongs to the bacterial ribosomal protein bS20 family.

Binds directly to 16S ribosomal RNA. This is Small ribosomal subunit protein bS20 from Nitrosospira multiformis (strain ATCC 25196 / NCIMB 11849 / C 71).